The primary structure comprises 70 residues: NAD(P)H-quinone oxidoreductase subunit O (70 aa).

The protein belongs to the complex I NdhO subunit family. As to quaternary structure, NDH-1 can be composed of about 15 different subunits; different subcomplexes with different compositions have been identified which probably have different functions.

It is found in the cellular thylakoid membrane. The enzyme catalyses a plastoquinone + NADH + (n+1) H(+)(in) = a plastoquinol + NAD(+) + n H(+)(out). The catalysed reaction is a plastoquinone + NADPH + (n+1) H(+)(in) = a plastoquinol + NADP(+) + n H(+)(out). Functionally, NDH-1 shuttles electrons from an unknown electron donor, via FMN and iron-sulfur (Fe-S) centers, to quinones in the respiratory and/or the photosynthetic chain. The immediate electron acceptor for the enzyme in this species is believed to be plastoquinone. Couples the redox reaction to proton translocation, and thus conserves the redox energy in a proton gradient. Cyanobacterial NDH-1 also plays a role in inorganic carbon-concentration. The protein is NAD(P)H-quinone oxidoreductase subunit O of Nostoc sp. (strain PCC 7120 / SAG 25.82 / UTEX 2576).